Consider the following 566-residue polypeptide: Putative ankyrin repeat protein RF_0987 (566 aa).

Disordered stretches follow at residues 61–118, 276–314, and 355–392; these read KKKN…HENS, PPVM…SAEI, and VNNN…SEST. Positions 78 to 92 are enriched in basic and acidic residues; the sequence is NQEEPKLASQEHTEA. Residues 101-112 are compositionally biased toward polar residues; the sequence is TGNTALPSVTAS. Over residues 296–308 the composition is skewed to low complexity; it reads TPVTTPSKVVPTT. A compositionally biased stretch (polar residues) spans 365–378; the sequence is EKSPPVSSSNVTIQ. 2 ANK repeats span residues 506–535 and 539–566; these read SGET…KIST and ECQY…KGYQ.

The protein is Putative ankyrin repeat protein RF_0987 of Rickettsia felis (strain ATCC VR-1525 / URRWXCal2) (Rickettsia azadi).